The following is a 225-amino-acid chain: NAD(P)H-quinone oxidoreductase subunit K, chloroplastic (225 aa).

[4Fe-4S] cluster-binding residues include Cys43, Cys44, Cys108, and Cys139.

This sequence belongs to the complex I 20 kDa subunit family. NDH is composed of at least 16 different subunits, 5 of which are encoded in the nucleus. [4Fe-4S] cluster is required as a cofactor.

Its subcellular location is the plastid. The protein resides in the chloroplast thylakoid membrane. The enzyme catalyses a plastoquinone + NADH + (n+1) H(+)(in) = a plastoquinol + NAD(+) + n H(+)(out). The catalysed reaction is a plastoquinone + NADPH + (n+1) H(+)(in) = a plastoquinol + NADP(+) + n H(+)(out). NDH shuttles electrons from NAD(P)H:plastoquinone, via FMN and iron-sulfur (Fe-S) centers, to quinones in the photosynthetic chain and possibly in a chloroplast respiratory chain. The immediate electron acceptor for the enzyme in this species is believed to be plastoquinone. Couples the redox reaction to proton translocation, and thus conserves the redox energy in a proton gradient. This Atropa belladonna (Belladonna) protein is NAD(P)H-quinone oxidoreductase subunit K, chloroplastic.